The sequence spans 128 residues: Organic solute transporter subunit beta (128 aa).

At 1-30 (MDHSAEKAAANAEVPQELLEEMLWYFRAED) the chain is on the extracellular side. A helical membrane pass occupies residues 31–53 (AAPWNYSILVLAVLVVMTSMFLL). At 54-128 (RRSILANRNR…FLPDPQETES (75 aa)) the chain is on the cytoplasmic side. Disordered stretches follow at residues 61 to 80 (RNRK…HLDD) and 101 to 128 (PDLA…ETES). 2 stretches are compositionally biased toward basic and acidic residues: residues 66-80 (QPQD…HLDD) and 101-115 (PDLA…EKDS). Residue S116 is modified to Phosphoserine.

This sequence belongs to the OST-beta family. Interacts with SLC51A. The Ost-alpha/Ost-beta complex is a heterodimer composed of alpha (SLC51A) and beta (SLC51B) subunit; induces the transport of SLC51A from the endoplasmic reticulum to the plasma membrane. Present at high level in ileum. In ileum, it is restricted to the apical domain on the mature villus enterocytes with little detectable expression in the goblet cells or crypt enterocytes (at protein level). Expressed in kidney but not in heart, brain, liver, spleen, embryo, lung, thymus, ovary nor testis.

It is found in the cell membrane. The enzyme catalyses taurocholate(out) = taurocholate(in). It catalyses the reaction tauroursodeoxycholate(out) = tauroursodeoxycholate(in). It carries out the reaction glycoursodeoxycholate(out) = glycoursodeoxycholate(in). The catalysed reaction is glycocholate(out) = glycocholate(in). The enzyme catalyses taurochenodeoxycholate(out) = taurochenodeoxycholate(in). It catalyses the reaction glycochenodeoxycholate(out) = glycochenodeoxycholate(in). It carries out the reaction taurodeoxycholate(out) = taurodeoxycholate(in). The catalysed reaction is glycodeoxycholate(out) = glycodeoxycholate(in). The enzyme catalyses prostaglandin E2(out) = prostaglandin E2(in). It catalyses the reaction estrone 3-sulfate(out) = estrone 3-sulfate(in). It carries out the reaction dehydroepiandrosterone 3-sulfate(out) = dehydroepiandrosterone 3-sulfate(in). Its function is as follows. Essential component of the Ost-alpha/Ost-beta complex, a heterodimer that acts as the intestinal basolateral transporter responsible for bile acid export from enterocytes into portal blood. The Ost-alpha/Ost-beta complex efficiently transports the major species of bile acids (taurocholate). Taurine conjugates are transported more efficiently across the basolateral membrane than glycine-conjugated bile acids. Can also transport steroids such as estrone 3-sulfate and dehydroepiandrosterone 3-sulfate, therefore playing a role in the enterohepatic circulation of sterols. Able to transport eicosanoids such as prostaglandin E2. Modulates SLC51A glycosylation, membrane trafficking and stability activities. This is Organic solute transporter subunit beta (Slc51b) from Mus musculus (Mouse).